The chain runs to 1900 residues: MRFTRGLKASSSLRAKAIGRLTKLSTGAPNDQNSNGTTLDLITHTLPIFYSTNTSKIYTIPLTLSEWEVLTSLCVAIPTTLDLVETMLKEIIAPYFLETPRQRISDVLSSKFKLEQMRNPIELLTFQLTKFMIQACEQYPVLYENIGGIISTYFERVLKIFTIKQSGLLSLVGFINAFIQFPNSTELTKFTWKKLAKLVLRGSFLNEVDKILNSSATFTNDSIVQYYDAGNELSSAYLLELISRLQVSLISHLLNTSHVGANLSEFLLNQQYQFYKFDQEVADENDDTKCIDDFFFNVRSNKQFFTDMCKISLQFCSESHILDLSTDNRARFSFDTRAHYLQTLCLIPFIEDTESELFESFTNVVSESIDKFFLSDVVTPSLIKAIVASASLLNFFTEKLSLTLIRMFPLLVASPHITTETVNDVAKIFTTGLYPLNEDAIVSTIYSMNNLLAVSEDGSPVPVLRERQLTITSGKNIEKDYFPLRNSSASLDGTGALLGNTTVGQLSSHDVNSGATMTYHASLISNCVAATTTIASYYNTQSITALTISILTQKVNSMSKELDGVILNSLARLAPNTSLTEFSLLLKFFKSRTVIATKIDDSALLKNIIKAKCVISKELLARHFSSDLYFMYLHDLLDSIIASGEVERLEHHRPQTEISRVADQIATYLEPLAALLPVPGDTPLDINKDEVTTNKFRNAWFNFVIHGYHLGGPIVKRNFSFLLTIAYNSPPLASEFPANNKELSLEMNTILRRGSSNENIKQQKQQITEYFNTNIVQYRTTSSSKIMFLAAAVLLETIRCEAGDCSKTLLYFSDPSILSGSIEKCIAVLSVSMIRKYARLIQKGNDAIFNSKMIAQQLNNLLLCLSHREPTLQDAAFHACEIFIRSIPSSLCHHLSLYTLLDMLTALFDSILDSEAHKFEPRYEFKLKHSKTTILVPSSSSWRATTLSRLHKSAKEWVRILLNRSNQDTKILLQSYISDLGEYSRLNSVEFGVSFAMDMAGLILPADKELSRLTYYGPEKPNTISGFISLHSWRSKYLFDTAITSSPEDIKRQIGISTQNIRKNLTLGNKIITKDVTDFLDMATALLILGNGAPASLIYDIVHIPFEVFTSASLKIATNVWLTIITEKPEVAHLLLVEVCYCWMRSIDDNIGLYSRDHDLKGEEYQKMEYSPYDKAGINRDAKNASQAMQPHLHVIKFFASHFEGTLFQSDFLLKIFTKCALYGIKNLYKASLHPFARMIRHELLLFATLVLNASYKQGSKYMGRLSQEITNGALSWFKRPVAWPFGSNELKIKADLSVTRDLFLQLNKLSSLMSRHCGKDYKILNYFLASEIQQIQTWLTPTEKIEGADSNELTSDIVEATFAKDPTLAINLLQRCYSKKAEDVLVGLVAKHALMCVGSPSALDLFIKGSHLSSKKDLHATLYWAPVSPLKSINLFLPEWQGNSFILQFSIYSLESQDVNLAFFYVPQIVQCLRYDKTGYVERLILDTAKISVLFSHQIIWNMLANCYKDDEGIQEDEIKPTLDRIRERMVSSFSQSHRDFYEREFEFFDEVTGISGKLKPYIKKSKAEKKHKIDEEMSKIEVKPDVYLPSNPDGVVIDIDRKSGKPLQSHAKAPFMATFKIKKDVKDPLTGKNKEVEKWQAAIFKVGDDCRQDVLALQLISLFRTIWSSIGLDVYVFPYRVTATAPGCGVIDVLPNSVSRDMLGREAVNGLYEYFTSKFGNESTIEFQNARNNFVKSLAGYSVISYLLQFKDRHNGNIMYDDQGHCLHIDFGFIFDIVPGGIKFEAVPFKLTKEMVKVMGGSPQTPAYLDFEELCIKAYLAARPHVEAIIECVNPMLGSGLPCFKGHKTIRNLRARFQPQKTDHEAALYMKALIRKSYESIFTKGYDEFQRLTNGIPY.

Ser459 is modified (phosphoserine). In terms of domain architecture, PIK helical spans 1345–1530 (KIEGADSNEL…KPTLDRIRER (186 aa)). Positions 1531–1648 (MVSSFSQSHR…EKWQAAIFKV (118 aa)) are pleckstrin homology (PH) domain conferring phosphoinositide binding specificity. A PI3K/PI4K catalytic domain is found at 1617-1884 (FMATFKIKKD…LIRKSYESIF (268 aa)). Residues 1623 to 1629 (IKKDVKD) are G-loop. The segment at 1751 to 1759 (QFKDRHNGN) is catalytic loop. The activation loop stretch occupies residues 1770-1794 (HIDFGFIFDIVPGGIKFEAVPFKLT).

The protein belongs to the PI3/PI4-kinase family. Type III PI4K subfamily.

It catalyses the reaction a 1,2-diacyl-sn-glycero-3-phospho-(1D-myo-inositol) + ATP = a 1,2-diacyl-sn-glycero-3-phospho-(1D-myo-inositol 4-phosphate) + ADP + H(+). Acts on phosphatidylinositol (PI) in the first committed step in the production of the second messenger inositol 1,4,5,-trisphosphate. STT4 functions in PKC1 protein kinase pathway. This chain is Phosphatidylinositol 4-kinase STT4 (STT4), found in Saccharomyces cerevisiae (strain ATCC 204508 / S288c) (Baker's yeast).